Consider the following 96-residue polypeptide: Co-chaperonin GroES (96 aa).

Belongs to the GroES chaperonin family. As to quaternary structure, heptamer of 7 subunits arranged in a ring. Interacts with the chaperonin GroEL.

It is found in the cytoplasm. Its function is as follows. Together with the chaperonin GroEL, plays an essential role in assisting protein folding. The GroEL-GroES system forms a nano-cage that allows encapsulation of the non-native substrate proteins and provides a physical environment optimized to promote and accelerate protein folding. GroES binds to the apical surface of the GroEL ring, thereby capping the opening of the GroEL channel. This chain is Co-chaperonin GroES, found in Alteromonas mediterranea (strain DSM 17117 / CIP 110805 / LMG 28347 / Deep ecotype).